A 313-amino-acid chain; its full sequence is Ribosomal RNA small subunit methyltransferase H (313 aa).

S-adenosyl-L-methionine-binding positions include 35 to 37 (GGH), aspartate 55, phenylalanine 80, aspartate 102, and glutamine 109.

It belongs to the methyltransferase superfamily. RsmH family.

The protein resides in the cytoplasm. It catalyses the reaction cytidine(1402) in 16S rRNA + S-adenosyl-L-methionine = N(4)-methylcytidine(1402) in 16S rRNA + S-adenosyl-L-homocysteine + H(+). In terms of biological role, specifically methylates the N4 position of cytidine in position 1402 (C1402) of 16S rRNA. This Shewanella violacea (strain JCM 10179 / CIP 106290 / LMG 19151 / DSS12) protein is Ribosomal RNA small subunit methyltransferase H.